We begin with the raw amino-acid sequence, 114 residues long: T cell receptor beta variable 10-3 (114 aa).

The N-terminal stretch at 1-21 is a signal peptide; that stretch reads MGTRLFFYVALCLLWTGHMDA. The 93-residue stretch at 22 to 114 folds into the Ig-like domain; sequence GITQSPRHKV…TSVYFCAISE (93 aa). Cys-42 and Cys-110 are disulfide-bonded.

In terms of assembly, alpha-beta TR is a heterodimer composed of an alpha and beta chain; disulfide-linked. The alpha-beta TR is associated with the transmembrane signaling CD3 coreceptor proteins to form the TR-CD3 (TcR or TCR). The assembly of alpha-beta TR heterodimers with CD3 occurs in the endoplasmic reticulum where a single alpha-beta TR heterodimer associates with one CD3D-CD3E heterodimer, one CD3G-CD3E heterodimer and one CD247 homodimer forming a stable octameric structure. CD3D-CD3E and CD3G-CD3E heterodimers preferentially associate with TR alpha and TR beta chains, respectively. The association of the CD247 homodimer is the last step of TcR assembly in the endoplasmic reticulum and is required for transport to the cell surface.

The protein resides in the cell membrane. Functionally, v region of the variable domain of T cell receptor (TR) beta chain that participates in the antigen recognition. Alpha-beta T cell receptors are antigen specific receptors which are essential to the immune response and are present on the cell surface of T lymphocytes. Recognize peptide-major histocompatibility (MH) (pMH) complexes that are displayed by antigen presenting cells (APC), a prerequisite for efficient T cell adaptive immunity against pathogens. Binding of alpha-beta TR to pMH complex initiates TR-CD3 clustering on the cell surface and intracellular activation of LCK that phosphorylates the ITAM motifs of CD3G, CD3D, CD3E and CD247 enabling the recruitment of ZAP70. In turn ZAP70 phosphorylates LAT, which recruits numerous signaling molecules to form the LAT signalosome. The LAT signalosome propagates signal branching to three major signaling pathways, the calcium, the mitogen-activated protein kinase (MAPK) kinase and the nuclear factor NF-kappa-B (NF-kB) pathways, leading to the mobilization of transcription factors that are critical for gene expression and essential for T cell growth and differentiation. The T cell repertoire is generated in the thymus, by V-(D)-J rearrangement. This repertoire is then shaped by intrathymic selection events to generate a peripheral T cell pool of self-MH restricted, non-autoaggressive T cells. Post-thymic interaction of alpha-beta TR with the pMH complexes shapes TR structural and functional avidity. The chain is T cell receptor beta variable 10-3 from Homo sapiens (Human).